A 351-amino-acid polypeptide reads, in one-letter code: Trace amine-associated receptor 2 (351 aa).

Residues 1-48 (MAVSSEQHELSHFKRTQTKKEKFNCSEYGNRSCPENERSLGVRVAMYS) lie on the Extracellular side of the membrane. N-linked (GlcNAc...) asparagine glycans are attached at residues asparagine 24 and asparagine 30. 2 disulfide bridges follow: cysteine 33/cysteine 197 and cysteine 116/cysteine 201. A helical membrane pass occupies residues 49 to 69 (FMAGSIFITIFGNLAMIISIS). Topologically, residues 70 to 79 (YFKQLHTPTN) are cytoplasmic. A helical transmembrane segment spans residues 80-100 (FLILSMAITDFLLGFTIMPYS). The Extracellular portion of the chain corresponds to 101–118 (MIRSVENCWYFGLTFCKI). Residues 119-139 (YYSFDLMLSITSIFHLCSVAI) form a helical membrane-spanning segment. Topologically, residues 140–162 (DRFYAICYPLLYSTKITIPVIKR) are cytoplasmic. The helical transmembrane segment at 163 to 183 (LLLLCWSVPGAFAFGVVFSEA) threads the bilayer. The Extracellular segment spans residues 184 to 207 (YADGIEGYDILVACSSSCPVMFNK). The chain crosses the membrane as a helical span at residues 208-228 (LWGTTLFMAGFFTPGSMMVGI). The Cytoplasmic segment spans residues 229–263 (YGKIFAVSRKHAHAINNLRENQNNQVKKDKKAAKT). A helical transmembrane segment spans residues 264 to 284 (LGIVIGVFLLCWFPCFFTILL). Residues 285–299 (DPFLNFSTPVVLFDA) lie on the Extracellular side of the membrane. The N-linked (GlcNAc...) asparagine glycan is linked to asparagine 289. The helical transmembrane segment at 300 to 322 (LTWFGYFNSTCNPLIYGFFYPWF) threads the bilayer. Residues 323–351 (RRALKYILLGKIFSSCFHNTILCMQKESE) lie on the Cytoplasmic side of the membrane.

The protein belongs to the G-protein coupled receptor 1 family. As to expression, not expressed in the pons, thalamus, hypothalamus, hippocampus, caudate, putamen, frontal cortex, basal forebrain, midbrain or liver.

The protein resides in the cell membrane. In terms of biological role, orphan olfactory receptor specific for trace amines. Trace amine compounds are enriched in animal body fluids and act on trace amine-associated receptors (TAARs) to elicit both intraspecific and interspecific innate behaviors. Ligand-binding causes a conformation change that triggers signaling via the G(s)-class of G-proteins which activate adenylate cyclase. The protein is Trace amine-associated receptor 2 of Homo sapiens (Human).